We begin with the raw amino-acid sequence, 88 residues long: Apolipoprotein C-I (88 aa).

Residues 1–26 (MRLFIALPVLIVVVAMALEGPAPAQA) form the signal peptide.

This sequence belongs to the apolipoprotein C1 family.

Its subcellular location is the secreted. Functionally, inhibitor of lipoprotein binding to the low density lipoprotein (LDL) receptor, LDL receptor-related protein, and very low density lipoprotein (VLDL) receptor. Associates with high density lipoproteins (HDL) and the triacylglycerol-rich lipoproteins in the plasma and makes up about 10% of the protein of the VLDL and 2% of that of HDL. Appears to interfere directly with fatty acid uptake and is also the major plasma inhibitor of cholesteryl ester transfer protein (CETP). Binds free fatty acids and reduces their intracellular esterification. Modulates the interaction of APOE with beta-migrating VLDL and inhibits binding of beta-VLDL to the LDL receptor-related protein. In Rattus norvegicus (Rat), this protein is Apolipoprotein C-I (Apoc1).